The primary structure comprises 398 residues: DnaJ-like protein R260 (398 aa).

Positions 7–72 constitute a J domain; the sequence is DLYEILGLTP…EKRRVYDQYG (66 aa). The segment at 118–202 adopts a CR-type zinc-finger fold; sequence KKTVKVTITV…CKGAGINKSE (85 aa). 4 CXXCXGXG motif repeats span residues 131–138, 147–154, 173–180, and 190–197; these read CDDCDATG, CKVCRGKG, CHGCQGKK, and CPSCKGAG. The segment at 364 to 398 is disordered; that stretch reads LRQINTDPSDESQDRDSEESYGGHGRPEGVGCAQQ. Positions 371–382 are enriched in acidic residues; that stretch reads PSDESQDRDSEE.

Requires Zn(2+) as cofactor.

The chain is DnaJ-like protein R260 from Acanthamoeba polyphaga mimivirus (APMV).